Here is a 334-residue protein sequence, read N- to C-terminus: Formamidase (334 aa).

In terms of domain architecture, CN hydrolase spans 14–260 (FLVAAIQFPV…WEIVTGEIYP (247 aa)). The active-site Proton acceptor is the glutamate 60. Catalysis depends on lysine 133, which acts as the Proton donor. The active-site Nucleophile is cysteine 166.

The protein belongs to the carbon-nitrogen hydrolase superfamily. Aliphatic amidase family.

It carries out the reaction formamide + H2O = formate + NH4(+). Its function is as follows. Is an aliphatic amidase with a restricted substrate specificity, as it only hydrolyzes formamide. The polypeptide is Formamidase (Helicobacter pylori (strain P12)).